The chain runs to 212 residues: High frequency lysogenization protein HflD homolog (212 aa).

A coiled-coil region spans residues 92 to 128 (LIALERKLNAKSAALDELGKRIGQLERQLEHFELLSE).

It belongs to the HflD family.

The protein resides in the cytoplasm. It localises to the cell inner membrane. In Pectobacterium atrosepticum (strain SCRI 1043 / ATCC BAA-672) (Erwinia carotovora subsp. atroseptica), this protein is High frequency lysogenization protein HflD homolog.